We begin with the raw amino-acid sequence, 276 residues long: Dermonecrotic toxin LarSicTox-alphaIB2c (276 aa).

Histidine 5 is an active-site residue. Residues glutamate 25 and aspartate 27 each contribute to the Mg(2+) site. Catalysis depends on histidine 41, which acts as the Nucleophile. 2 disulfide bridges follow: cysteine 45–cysteine 51 and cysteine 47–cysteine 190. Aspartate 85 contacts Mg(2+). Asparagine 253 carries N-linked (GlcNAc...) asparagine glycosylation.

It belongs to the arthropod phospholipase D family. Class II subfamily. It depends on Mg(2+) as a cofactor. As to expression, expressed by the venom gland.

It localises to the secreted. It catalyses the reaction an N-(acyl)-sphingosylphosphocholine = an N-(acyl)-sphingosyl-1,3-cyclic phosphate + choline. The enzyme catalyses an N-(acyl)-sphingosylphosphoethanolamine = an N-(acyl)-sphingosyl-1,3-cyclic phosphate + ethanolamine. The catalysed reaction is a 1-acyl-sn-glycero-3-phosphocholine = a 1-acyl-sn-glycero-2,3-cyclic phosphate + choline. It carries out the reaction a 1-acyl-sn-glycero-3-phosphoethanolamine = a 1-acyl-sn-glycero-2,3-cyclic phosphate + ethanolamine. Its function is as follows. Dermonecrotic toxins cleave the phosphodiester linkage between the phosphate and headgroup of certain phospholipids (sphingolipid and lysolipid substrates), forming an alcohol (often choline) and a cyclic phosphate. This toxin acts on sphingomyelin (SM). It may also act on ceramide phosphoethanolamine (CPE), lysophosphatidylcholine (LPC) and lysophosphatidylethanolamine (LPE), but not on lysophosphatidylserine (LPS), and lysophosphatidylglycerol (LPG). It acts by transphosphatidylation, releasing exclusively cyclic phosphate products as second products. Induces dermonecrosis, hemolysis, increased vascular permeability, edema, inflammatory response, and platelet aggregation. The polypeptide is Dermonecrotic toxin LarSicTox-alphaIB2c (Loxosceles arizonica (Arizona brown spider)).